The chain runs to 159 residues: ATP synthase subunit b 2 (159 aa).

Residues 1–21 form a helical membrane-spanning segment; the sequence is MDATFWALIGLIIFLAILAYL.

This sequence belongs to the ATPase B chain family. In terms of assembly, F-type ATPases have 2 components, F(1) - the catalytic core - and F(0) - the membrane proton channel. F(1) has five subunits: alpha(3), beta(3), gamma(1), delta(1), epsilon(1). F(0) has three main subunits: a(1), b(2) and c(10-14). The alpha and beta chains form an alternating ring which encloses part of the gamma chain. F(1) is attached to F(0) by a central stalk formed by the gamma and epsilon chains, while a peripheral stalk is formed by the delta and b chains.

Its subcellular location is the cell inner membrane. Functionally, f(1)F(0) ATP synthase produces ATP from ADP in the presence of a proton or sodium gradient. F-type ATPases consist of two structural domains, F(1) containing the extramembraneous catalytic core and F(0) containing the membrane proton channel, linked together by a central stalk and a peripheral stalk. During catalysis, ATP synthesis in the catalytic domain of F(1) is coupled via a rotary mechanism of the central stalk subunits to proton translocation. In terms of biological role, component of the F(0) channel, it forms part of the peripheral stalk, linking F(1) to F(0). In Brucella anthropi (strain ATCC 49188 / DSM 6882 / CCUG 24695 / JCM 21032 / LMG 3331 / NBRC 15819 / NCTC 12168 / Alc 37) (Ochrobactrum anthropi), this protein is ATP synthase subunit b 2.